Consider the following 87-residue polypeptide: Small ribosomal subunit protein uS17 (87 aa).

Belongs to the universal ribosomal protein uS17 family. Part of the 30S ribosomal subunit.

In terms of biological role, one of the primary rRNA binding proteins, it binds specifically to the 5'-end of 16S ribosomal RNA. The chain is Small ribosomal subunit protein uS17 from Staphylococcus carnosus (strain TM300).